Here is a 557-residue protein sequence, read N- to C-terminus: Inositol-3-phosphate synthase 1 (557 aa).

NAD(+)-binding residues include Gly-67, Gly-68, Asn-69, Asn-70, Asp-141, Ser-177, Val-178, Gln-188, Arg-191, Thr-228, Ala-229, Asn-230, Thr-231, Gly-278, Ser-279, Asp-303, Ser-306, Asn-337, Asn-338, Asp-339, and Lys-352. A Phosphoserine modification is found at Ser-279. Residue Ser-357 is modified to Phosphoserine. Residues Gly-390, Asp-391, Asp-419, and Ser-420 each coordinate NAD(+). The interval 512 to 557 (GPGIKPGEVVATSPLPCKKEPTPATNGCTGDANGHPQAPTPKLSTA) is disordered. A Phosphoserine modification is found at Ser-524.

It belongs to the myo-inositol 1-phosphate synthase family. It depends on NAD(+) as a cofactor. In testis, it is expressed in Sertoli cells. Highly expressed in 2 types of germ cells, pachytene spermatocytes and round spermatids.

It localises to the cytoplasm. The catalysed reaction is D-glucose 6-phosphate = 1D-myo-inositol 3-phosphate. It participates in polyol metabolism; myo-inositol biosynthesis; myo-inositol from D-glucose 6-phosphate: step 1/2. Key enzyme in myo-inositol biosynthesis pathway that catalyzes the conversion of glucose 6-phosphate to 1-myo-inositol 1-phosphate in a NAD-dependent manner. Rate-limiting enzyme in the synthesis of all inositol-containing compounds. The protein is Inositol-3-phosphate synthase 1 (Isyna1) of Mus musculus (Mouse).